Consider the following 287-residue polypeptide: Phycobilisome 32.1 kDa linker polypeptide, phycocyanin-associated, rod (287 aa).

The region spanning 2–180 (AITAAASRLG…LYRGYANSDR (179 aa)) is the PBS-linker domain. One can recognise a CpcD-like domain in the interval 235-287 (GRVYRIEVAGIRQPGYPGVRRSSTAFLVPYEQLSAKMQQLQRTGARIISVNPA).

Belongs to the phycobilisome linker protein family.

The protein localises to the cellular thylakoid membrane. Rod linker protein, associated with phycocyanin. Linker polypeptides determine the state of aggregation and the location of the disk-shaped phycobiliprotein units within the phycobilisome and modulate their spectroscopic properties in order to mediate a directed and optimal energy transfer. The polypeptide is Phycobilisome 32.1 kDa linker polypeptide, phycocyanin-associated, rod (cpcC) (Thermosynechococcus vestitus (strain NIES-2133 / IAM M-273 / BP-1)).